The primary structure comprises 443 residues: Histidinol dehydrogenase (443 aa).

Residues Tyr133, Gln191, and Asn214 each contribute to the NAD(+) site. Positions 240, 262, and 265 each coordinate substrate. Positions 262 and 265 each coordinate Zn(2+). Catalysis depends on proton acceptor residues Glu329 and His330. Residues His330, Asp363, Glu417, and His422 each contribute to the substrate site. Asp363 is a Zn(2+) binding site. Position 422 (His422) interacts with Zn(2+).

It belongs to the histidinol dehydrogenase family. Homodimer. Zn(2+) serves as cofactor.

The catalysed reaction is L-histidinol + 2 NAD(+) + H2O = L-histidine + 2 NADH + 3 H(+). The protein operates within amino-acid biosynthesis; L-histidine biosynthesis; L-histidine from 5-phospho-alpha-D-ribose 1-diphosphate: step 9/9. Functionally, catalyzes the sequential NAD-dependent oxidations of L-histidinol to L-histidinaldehyde and then to L-histidine. In Blochmanniella pennsylvanica (strain BPEN), this protein is Histidinol dehydrogenase.